Consider the following 339-residue polypeptide: DNA double-strand break repair nuclease NurA (339 aa).

Positions 58 and 133 each coordinate Mn(2+).

The protein belongs to the NurA family. As to quaternary structure, homodimer. Forms a complex with HerA. Requires Mn(2+) as cofactor.

With respect to regulation, nuclease activity requires the presence of HerA. Another report shows endo- and exonuclease activity in the absence of HerA; HerA stimulates the exo- but not endonuclease. LhrC-Core (Hel112) inhibits the exonuclease activity of the HerA-NurA complex on ss- and dsDNA, has no effect on the nicking activity of NurA. Endo- and exonuclease activities are inhibited by ATP; ATP may subtract divalent ions from the reaction preventing nuclease activity, HerA can alleviate ATP inhibition. Involved in DNA double-strand break (DSB) repair. Probably acts with HerA to stimulate resection of the 5' strand and produce the long 3' single-strand that is required for RadA loading. NurA and HerA together stimulate the end-resection of six nucleotides of a linear DNA substrate. Processes linear double-stranded (ds)DNA probes with 3' or 5' single-stranded overhangs or blunt ends. Has endonuclease activity on single-stranded (ss)DNA and nicking activity on dsDNA without HerA as well as 5'- and 3'-exonuclease activity on ssDNA. Binds ssDNA, dsDNA, forked and bubble DNA equally well. In Saccharolobus solfataricus (strain ATCC 35092 / DSM 1617 / JCM 11322 / P2) (Sulfolobus solfataricus), this protein is DNA double-strand break repair nuclease NurA.